The chain runs to 42 residues: MKVKGSLKSHRNRDKNCKVVKRGGRIYIINEIKPRCKTRQGS.

Belongs to the bacterial ribosomal protein bL36 family.

The protein is Large ribosomal subunit protein bL36 of Wolbachia sp. subsp. Brugia malayi (strain TRS).